A 918-amino-acid polypeptide reads, in one-letter code: Isoleucine--tRNA ligase (918 aa).

The short motif at 57-67 is the 'HIGH' region element; it reads PYANGDIHIGH. E568 serves as a coordination point for L-isoleucyl-5'-AMP. The short motif at 609-613 is the 'KMSKS' region element; that stretch reads KMSKS. ATP is bound at residue K612. C894, C897, C909, and C912 together coordinate Zn(2+).

This sequence belongs to the class-I aminoacyl-tRNA synthetase family. IleS type 1 subfamily. As to quaternary structure, monomer. It depends on Zn(2+) as a cofactor.

The protein localises to the cytoplasm. It catalyses the reaction tRNA(Ile) + L-isoleucine + ATP = L-isoleucyl-tRNA(Ile) + AMP + diphosphate. Functionally, catalyzes the attachment of isoleucine to tRNA(Ile). As IleRS can inadvertently accommodate and process structurally similar amino acids such as valine, to avoid such errors it has two additional distinct tRNA(Ile)-dependent editing activities. One activity is designated as 'pretransfer' editing and involves the hydrolysis of activated Val-AMP. The other activity is designated 'posttransfer' editing and involves deacylation of mischarged Val-tRNA(Ile). The protein is Isoleucine--tRNA ligase of Sulfurovum sp. (strain NBC37-1).